The chain runs to 94 residues: Integration host factor subunit beta (94 aa).

This sequence belongs to the bacterial histone-like protein family. As to quaternary structure, heterodimer of an alpha and a beta chain.

In terms of biological role, this protein is one of the two subunits of integration host factor, a specific DNA-binding protein that functions in genetic recombination as well as in transcriptional and translational control. In Caulobacter sp. (strain K31), this protein is Integration host factor subunit beta.